Consider the following 1304-residue polypeptide: DNA-directed RNA polymerase subunit beta' (1304 aa).

A disordered region spans residues 1 to 23; the sequence is MSEKGRFSAGLSRQAADGNKADA. Zn(2+)-binding residues include Cys-241, Cys-315, Cys-322, and Cys-325. Residues 1256 to 1268 are compositionally biased toward acidic residues; sequence AAEPEPDEEEEEP. The interval 1256-1304 is disordered; sequence AAEPEPDEEEEEPAVLPELPPRLILEDDQLIDDSTPAFDELEEDDDEEE. The segment covering 1269 to 1278 has biased composition (low complexity); the sequence is AVLPELPPRL. Residues 1294–1304 are compositionally biased toward acidic residues; it reads DELEEDDDEEE.

This sequence belongs to the RNA polymerase beta' chain family. RpoC2 subfamily. As to quaternary structure, in cyanobacteria the RNAP catalytic core is composed of 2 alpha, 1 beta, 1 beta', 1 gamma and 1 omega subunit. When a sigma factor is associated with the core the holoenzyme is formed, which can initiate transcription. It depends on Zn(2+) as a cofactor.

The enzyme catalyses RNA(n) + a ribonucleoside 5'-triphosphate = RNA(n+1) + diphosphate. In terms of biological role, DNA-dependent RNA polymerase catalyzes the transcription of DNA into RNA using the four ribonucleoside triphosphates as substrates. This chain is DNA-directed RNA polymerase subunit beta', found in Synechococcus sp. (strain JA-2-3B'a(2-13)) (Cyanobacteria bacterium Yellowstone B-Prime).